The following is a 432-amino-acid chain: Hexuronate transporter (432 aa).

The first 31 residues, 1–31 (MRKIKGLRWYMIALVTLGTVLGYLTRNTVAA), serve as a signal peptide directing secretion. Over 33–48 (APTLMEELNISTQQYS) the chain is Periplasmic. Residues 49–69 (YIIAAYSAAYTVMQPVAGYVL) traverse the membrane as a helical segment. The Cytoplasmic segment spans residues 70–75 (DVLGTK). The chain crosses the membrane as a helical span at residues 76–96 (IGYAMFAVLWAVFCGATALAG). The Periplasmic portion of the chain corresponds to 97–99 (SWG). The chain crosses the membrane as a helical span at residues 100 to 120 (GLAVARGAVGAAEAAMIPAGL). At 121-138 (KASSEWFPAKERSIAVGY) the chain is on the cytoplasmic side. Residues 139–159 (FNVGSSIGAMIAPPLVVWAIV) form a helical membrane-spanning segment. Residues 160–164 (MHSWQ) lie on the Periplasmic side of the membrane. Residues 165–185 (MAFIISGALSFIWAMAWLIFY) form a helical membrane-spanning segment. The Cytoplasmic portion of the chain corresponds to 186–236 (KHPRDQKHLTDEERDYIINGQEAQHQVSTAKKMSVGQILRNRQFWGIALPR). Residues 237 to 257 (FLAEPAWGTFNAWIPLFMFKV) traverse the membrane as a helical segment. The Periplasmic portion of the chain corresponds to 258-264 (YGFNLKE). Residues 265-285 (IAMFAWMPMLFADLGCILGGY) form a helical membrane-spanning segment. Residues 286–293 (LPPLFQRW) lie on the Cytoplasmic side of the membrane. A helical membrane pass occupies residues 294 to 314 (FGVNLIVSRKMVVTLGAVLMI). Over 315–317 (GPG) the chain is Periplasmic. Residues 318-338 (MIGLFTNPYVAIMLLCIGGFA) form a helical membrane-spanning segment. Residues 339 to 369 (HQALSGALITLSSDVFGRNEVATANGLTGMS) lie on the Cytoplasmic side of the membrane. The helical transmembrane segment at 370–390 (AWLASTLFALVVGALADTIGF) threads the bilayer. S391 is a topological domain (periplasmic). A helical transmembrane segment spans residues 392–412 (PLFAVLAVFDLLGALVIWTVL). The Cytoplasmic segment spans residues 413–432 (QNKPAIEVAQETHNDPAPQH).

Belongs to the major facilitator superfamily. Phthalate permease family.

The protein localises to the cell inner membrane. The enzyme catalyses aldehydo-D-glucuronate(in) + H(+)(in) = aldehydo-D-glucuronate(out) + H(+)(out). It carries out the reaction aldehydo-D-galacturonate(out) + H(+)(out) = aldehydo-D-galacturonate(in) + H(+)(in). Its function is as follows. Transport of aldohexuronates such as D-glucuronate and D-galacturonate. The sequence is that of Hexuronate transporter (exuT) from Escherichia coli O157:H7.